The sequence spans 862 residues: Transcription initiation factor TFIID subunit 4B (862 aa).

The sufficient for interaction with ZNF628 stretch occupies residues 100 to 241 (NTTTIQFPAN…TPSNEPNLKA (142 aa)). The span at 219–237 (VTTLKPSSLGASSTPSNEP) shows a compositional bias: polar residues. Residues 219 to 239 (VTTLKPSSLGASSTPSNEPNL) are disordered. The TAFH domain occupies 256–353 (LENVKKCKNF…CVQQTSSDMV (98 aa)). The interval 511 to 533 (PGPVLSQPAGIPQAVQVKQLVVQ) is required for interaction with P65/RELA. The short motif at 516 to 556 (SQPAGIPQAVQVKQLVVQQPSGGNEKQVTTISHSSTLTIQK) is the Nuclear export signal element. Position 595 is a phosphoserine (Ser-595). Positions 653–702 (PFLFIGALQKRILDIGKKHDITELNSDAVNLISQATQERLRGLLEKLTAI) constitute a Histone-fold domain. Residues 722–787 (TRSQLKFLEK…LAQIQHRDAN (66 aa)) adopt a coiled-coil conformation. A required for interaction with TAF12 region spans residues 830-862 (PRITRICLRDLIFCMEQEREMKYSRALYLALLK).

Belongs to the TAF4 family. In terms of assembly, TFIID is composed of TATA binding protein (TBP) and a number of TBP-associated factors (TAFs). Heterodimerizes with TAF12/TFII20 via the C-terminal H2A-like histone-fold domain. This heterodimer forms a histone-like octamer with the TAF6/TAFII70-TAF9/TAFII31 heterodimer. Interacts with P65/RELA homodimers and P65/RELA-REL heterodimers. Interaction with POU2AF1, via its C-terminal activation domain, is required for octamer-dependent transcription. Interacts with ZNF628. In terms of processing, under stimulation by forskolin, Isoform 1 is phosphorylated by protein kinase A (PKA). As to expression, preferentially expressed in ovarian granulosa cells (at protein level). Highly expressed in B-cells.

The protein localises to the nucleus. Its subcellular location is the cytoplasm. Its function is as follows. Cell type-specific subunit of the general transcription factor TFIID that may function as a gene-selective coactivator in certain cells. TFIID is a multimeric protein complex that plays a central role in mediating promoter responses to various activators and repressors. TAF4B is a transcriptional coactivator of the p65/RELA NF-kappa-B subunit. Involved in the activation of a subset of antiapoptotic genes including TNFAIP3. May be involved in regulating folliculogenesis. Through interaction with OCBA/POU2AF1, acts as a coactivator of B-cell-specific transcription. Plays a role in spermiogenesis and oogenesis. The polypeptide is Transcription initiation factor TFIID subunit 4B (TAF4B) (Homo sapiens (Human)).